A 738-amino-acid chain; its full sequence is Polyphosphate kinase (738 aa).

The disordered stretch occupies residues 1–48 (MIGNDRWVTEIETGPVTEARPDTNAREPGDRTPAAPPAATPAATTDQL). Residues 19 to 30 (ARPDTNAREPGD) show a composition bias toward basic and acidic residues. Position 91 (asparagine 91) interacts with ATP. Mg(2+)-binding residues include arginine 427 and arginine 457. Histidine 487 (phosphohistidine intermediate) is an active-site residue. Tyrosine 520, arginine 620, and histidine 648 together coordinate ATP.

It belongs to the polyphosphate kinase 1 (PPK1) family. It depends on Mg(2+) as a cofactor. In terms of processing, an intermediate of this reaction is the autophosphorylated ppk in which a phosphate is covalently linked to a histidine residue through a N-P bond.

It catalyses the reaction [phosphate](n) + ATP = [phosphate](n+1) + ADP. Functionally, catalyzes the reversible transfer of the terminal phosphate of ATP to form a long-chain polyphosphate (polyP). The chain is Polyphosphate kinase from Mycobacterium ulcerans (strain Agy99).